Reading from the N-terminus, the 230-residue chain is Ribose-5-phosphate isomerase A (230 aa).

Residues 29-32 (TGST), 85-88 (DGAD), and 98-101 (KGGG) each bind substrate. E107 (proton acceptor) is an active-site residue. K125 lines the substrate pocket.

Belongs to the ribose 5-phosphate isomerase family. In terms of assembly, homodimer.

It carries out the reaction aldehydo-D-ribose 5-phosphate = D-ribulose 5-phosphate. It participates in carbohydrate degradation; pentose phosphate pathway; D-ribose 5-phosphate from D-ribulose 5-phosphate (non-oxidative stage): step 1/1. Catalyzes the reversible conversion of ribose-5-phosphate to ribulose 5-phosphate. This is Ribose-5-phosphate isomerase A from Staphylococcus epidermidis (strain ATCC 35984 / DSM 28319 / BCRC 17069 / CCUG 31568 / BM 3577 / RP62A).